The following is a 320-amino-acid chain: Ribonuclease Z (320 aa).

7 residues coordinate Zn(2+): H63, H65, D67, H68, H141, D212, and H270. The active-site Proton acceptor is the D67.

It belongs to the RNase Z family. In terms of assembly, homodimer. Requires Zn(2+) as cofactor.

It carries out the reaction Endonucleolytic cleavage of RNA, removing extra 3' nucleotides from tRNA precursor, generating 3' termini of tRNAs. A 3'-hydroxy group is left at the tRNA terminus and a 5'-phosphoryl group is left at the trailer molecule.. In terms of biological role, zinc phosphodiesterase, which displays some tRNA 3'-processing endonuclease activity. Probably involved in tRNA maturation, by removing a 3'-trailer from precursor tRNA. The protein is Ribonuclease Z of Lacticaseibacillus casei (strain BL23) (Lactobacillus casei).